We begin with the raw amino-acid sequence, 306 residues long: Ciliary microtubule inner protein 2B (306 aa).

The interval 61–92 is disordered; sequence QSNPFPPPRDHSFDGGSQELGGRRQHPGDPNL.

The protein belongs to the CIMIP2 family. Expressed in airway epithelial cells.

Its subcellular location is the cytoplasm. The protein localises to the cytoskeleton. It localises to the cilium axoneme. Functionally, microtubule inner protein (MIP) part of the dynein-decorated doublet microtubules (DMTs) in cilia axoneme, which is required for motile cilia beating. The protein is Ciliary microtubule inner protein 2B (cimip2b) of Xenopus tropicalis (Western clawed frog).